We begin with the raw amino-acid sequence, 275 residues long: Diaminopimelate epimerase (275 aa).

Substrate is bound by residues asparagine 12, glutamine 45, and asparagine 65. Catalysis depends on cysteine 74, which acts as the Proton donor. Substrate-binding positions include 75 to 76 (GN), asparagine 158, asparagine 191, and 209 to 210 (ER). The active-site Proton acceptor is the cysteine 218. 219–220 (GT) lines the substrate pocket.

It belongs to the diaminopimelate epimerase family. Homodimer.

The protein resides in the cytoplasm. It catalyses the reaction (2S,6S)-2,6-diaminopimelate = meso-2,6-diaminopimelate. The protein operates within amino-acid biosynthesis; L-lysine biosynthesis via DAP pathway; DL-2,6-diaminopimelate from LL-2,6-diaminopimelate: step 1/1. Functionally, catalyzes the stereoinversion of LL-2,6-diaminopimelate (L,L-DAP) to meso-diaminopimelate (meso-DAP), a precursor of L-lysine and an essential component of the bacterial peptidoglycan. The chain is Diaminopimelate epimerase from Shewanella oneidensis (strain ATCC 700550 / JCM 31522 / CIP 106686 / LMG 19005 / NCIMB 14063 / MR-1).